Here is a 271-residue protein sequence, read N- to C-terminus: Acyl-[acyl-carrier-protein]--UDP-N-acetylglucosamine O-acyltransferase (271 aa).

This sequence belongs to the transferase hexapeptide repeat family. LpxA subfamily. Homotrimer.

It is found in the cytoplasm. It catalyses the reaction a (3R)-hydroxyacyl-[ACP] + UDP-N-acetyl-alpha-D-glucosamine = a UDP-3-O-[(3R)-3-hydroxyacyl]-N-acetyl-alpha-D-glucosamine + holo-[ACP]. It functions in the pathway glycolipid biosynthesis; lipid IV(A) biosynthesis; lipid IV(A) from (3R)-3-hydroxytetradecanoyl-[acyl-carrier-protein] and UDP-N-acetyl-alpha-D-glucosamine: step 1/6. In terms of biological role, involved in the biosynthesis of lipid A, a phosphorylated glycolipid that anchors the lipopolysaccharide to the outer membrane of the cell. The chain is Acyl-[acyl-carrier-protein]--UDP-N-acetylglucosamine O-acyltransferase from Azorhizobium caulinodans (strain ATCC 43989 / DSM 5975 / JCM 20966 / LMG 6465 / NBRC 14845 / NCIMB 13405 / ORS 571).